A 223-amino-acid polypeptide reads, in one-letter code: Cytidylate kinase (223 aa).

An ATP-binding site is contributed by 17 to 25; that stretch reads GPTASGKGT.

Belongs to the cytidylate kinase family. Type 1 subfamily.

Its subcellular location is the cytoplasm. It carries out the reaction CMP + ATP = CDP + ADP. It catalyses the reaction dCMP + ATP = dCDP + ADP. This is Cytidylate kinase from Bordetella pertussis (strain Tohama I / ATCC BAA-589 / NCTC 13251).